Consider the following 86-residue polypeptide: Small ribosomal subunit protein uS17 (86 aa).

Belongs to the universal ribosomal protein uS17 family. In terms of assembly, part of the 30S ribosomal subunit.

Its function is as follows. One of the primary rRNA binding proteins, it binds specifically to the 5'-end of 16S ribosomal RNA. The protein is Small ribosomal subunit protein uS17 of Desulfitobacterium hafniense (strain DSM 10664 / DCB-2).